We begin with the raw amino-acid sequence, 375 residues long: Probable 1-acyl-sn-glycerol-3-phosphate acyltransferase 5 (375 aa).

2 helical membrane passes run 21–41 (IICLMVLVSTAFMMLIFWGFL) and 57–77 (CVSFFFGSWLALWPFLFEKIN). The HXXXXD motif motif lies at 100 to 105 (HRTEVD). Transmembrane regions (helical) follow at residues 312–332 (YLINCLAVIAFTTICTHLTFF) and 337–357 (WFRIYVSLACVYLTSATHFNL).

The protein belongs to the 1-acyl-sn-glycerol-3-phosphate acyltransferase family. In terms of tissue distribution, widely expressed at low level.

The protein localises to the membrane. The catalysed reaction is a 1-acyl-sn-glycero-3-phosphate + an acyl-CoA = a 1,2-diacyl-sn-glycero-3-phosphate + CoA. It functions in the pathway phospholipid metabolism; CDP-diacylglycerol biosynthesis; CDP-diacylglycerol from sn-glycerol 3-phosphate: step 2/3. May convert lysophosphatidic acid (LPA) into phosphatidic acid by incorporating acyl moiety at the 2 position. Has no activity when expressed in bacteria or yeast. In Arabidopsis thaliana (Mouse-ear cress), this protein is Probable 1-acyl-sn-glycerol-3-phosphate acyltransferase 5 (LPAT5).